A 402-amino-acid polypeptide reads, in one-letter code: Acetate kinase (402 aa).

Asn-10 serves as a coordination point for Mg(2+). An ATP-binding site is contributed by Lys-17. Position 89 (Arg-89) interacts with substrate. Catalysis depends on Asp-148, which acts as the Proton donor/acceptor. ATP-binding positions include 208–212 (HLGNG), 283–285 (DCR), and 334–338 (GIGEN). Glu-389 is a Mg(2+) binding site.

Belongs to the acetokinase family. Homodimer. Requires Mg(2+) as cofactor. Mn(2+) serves as cofactor.

The protein localises to the cytoplasm. The enzyme catalyses acetate + ATP = acetyl phosphate + ADP. It participates in metabolic intermediate biosynthesis; acetyl-CoA biosynthesis; acetyl-CoA from acetate: step 1/2. Its function is as follows. Catalyzes the formation of acetyl phosphate from acetate and ATP. Can also catalyze the reverse reaction. This is Acetate kinase from Actinobacillus pleuropneumoniae serotype 7 (strain AP76).